Here is a 341-residue protein sequence, read N- to C-terminus: L-threonine 3-dehydrogenase (341 aa).

C38 is a Zn(2+) binding site. Active-site charge relay system residues include T40 and H43. Positions 63, 64, 93, 96, 99, and 107 each coordinate Zn(2+). NAD(+) contacts are provided by residues I175, D195, R200, 262–264 (LGI), and 286–287 (IY).

It belongs to the zinc-containing alcohol dehydrogenase family. Homotetramer. It depends on Zn(2+) as a cofactor.

Its subcellular location is the cytoplasm. The catalysed reaction is L-threonine + NAD(+) = (2S)-2-amino-3-oxobutanoate + NADH + H(+). Its pathway is amino-acid degradation; L-threonine degradation via oxydo-reductase pathway; glycine from L-threonine: step 1/2. In terms of biological role, catalyzes the NAD(+)-dependent oxidation of L-threonine to 2-amino-3-ketobutyrate. This chain is L-threonine 3-dehydrogenase, found in Shewanella frigidimarina (strain NCIMB 400).